Consider the following 589-residue polypeptide: Leucine-rich repeat and immunoglobulin-like domain-containing nogo receptor-interacting protein 3 (589 aa).

Positions methionine 1 to glycine 23 are cleaved as a signal peptide. The 30-residue stretch at cysteine 24–alanine 53 folds into the LRRNT domain. Residues cysteine 24 to threonine 528 lie on the Extracellular side of the membrane. LRR repeat units lie at residues glutamate 54 to serine 75, threonine 78 to asparagine 99, arginine 102 to histidine 123, serine 126 to aspartate 147, serine 150 to glycine 171, glycine 174 to histidine 195, histidine 206 to glutamate 227, asparagine 246 to glutamine 267, histidine 270 to aspartate 291, arginine 294 to glycine 315, and glutamine 318 to serine 339. Residue asparagine 184 is glycosylated (N-linked (GlcNAc...) asparagine). 3 N-linked (GlcNAc...) asparagine glycosylation sites follow: asparagine 246, asparagine 256, and asparagine 275. A glycan (N-linked (GlcNAc...) asparagine) is linked at asparagine 323. One can recognise an LRRCT domain in the interval asparagine 351 to lysine 405. The region spanning proline 406–threonine 495 is the Ig-like C2-type domain. Cysteine 428 and cysteine 479 are disulfide-bonded. Residues asparagine 487, asparagine 501, and asparagine 509 are each glycosylated (N-linked (GlcNAc...) asparagine). Residues alanine 529–tryptophan 549 form a helical membrane-spanning segment. At serine 550 to isoleucine 589 the chain is on the cytoplasmic side.

The protein resides in the membrane. The protein is Leucine-rich repeat and immunoglobulin-like domain-containing nogo receptor-interacting protein 3 (Lingo3) of Mus musculus (Mouse).